A 507-amino-acid polypeptide reads, in one-letter code: Lysine--tRNA ligase (507 aa).

Mg(2+) contacts are provided by Glu-416 and Glu-423.

Belongs to the class-II aminoacyl-tRNA synthetase family. Homodimer. Mg(2+) serves as cofactor.

It is found in the cytoplasm. It carries out the reaction tRNA(Lys) + L-lysine + ATP = L-lysyl-tRNA(Lys) + AMP + diphosphate. The sequence is that of Lysine--tRNA ligase from Hahella chejuensis (strain KCTC 2396).